The primary structure comprises 356 residues: 1-deoxy-D-xylulose 5-phosphate reductoisomerase (356 aa).

Residues threonine 7, glycine 8, serine 9, isoleucine 10, glycine 31, asparagine 33, and asparagine 111 each contribute to the NADPH site. Lysine 112 is a 1-deoxy-D-xylulose 5-phosphate binding site. Glutamate 113 lines the NADPH pocket. Aspartate 131 lines the Mn(2+) pocket. 4 residues coordinate 1-deoxy-D-xylulose 5-phosphate: serine 132, glutamate 133, serine 155, and histidine 178. Glutamate 133 serves as a coordination point for Mn(2+). Residue glycine 184 coordinates NADPH. Residues serine 191, asparagine 196, lysine 197, and glutamate 200 each contribute to the 1-deoxy-D-xylulose 5-phosphate site. Glutamate 200 provides a ligand contact to Mn(2+).

Belongs to the DXR family. Requires Mg(2+) as cofactor. The cofactor is Mn(2+).

It catalyses the reaction 2-C-methyl-D-erythritol 4-phosphate + NADP(+) = 1-deoxy-D-xylulose 5-phosphate + NADPH + H(+). The protein operates within isoprenoid biosynthesis; isopentenyl diphosphate biosynthesis via DXP pathway; isopentenyl diphosphate from 1-deoxy-D-xylulose 5-phosphate: step 1/6. Functionally, catalyzes the NADPH-dependent rearrangement and reduction of 1-deoxy-D-xylulose-5-phosphate (DXP) to 2-C-methyl-D-erythritol 4-phosphate (MEP). The chain is 1-deoxy-D-xylulose 5-phosphate reductoisomerase from Campylobacter jejuni subsp. jejuni serotype O:6 (strain 81116 / NCTC 11828).